We begin with the raw amino-acid sequence, 1500 residues long: DNA-directed RNA polymerase subunit beta' (1500 aa).

Zn(2+) contacts are provided by C60, C62, C75, and C78. Residues 180–199 (DLGGMETAQRSTQRQIEEDY) form a disordered region. Residues D626, D628, and D630 each contribute to the Mg(2+) site. Residues C1002, C1075, C1082, and C1085 each contribute to the Zn(2+) site. Residues 1440–1500 (EVQQAEKSAE…DSDHPDLSSL (61 aa)) are disordered. Residues 1449–1468 (EPTTTALPTTNGHQAPQSDT) are compositionally biased toward polar residues.

Belongs to the RNA polymerase beta' chain family. In terms of assembly, the RNAP catalytic core consists of 2 alpha, 1 beta, 1 beta' and 1 omega subunit. When a sigma factor is associated with the core the holoenzyme is formed, which can initiate transcription. Mg(2+) serves as cofactor. It depends on Zn(2+) as a cofactor.

The enzyme catalyses RNA(n) + a ribonucleoside 5'-triphosphate = RNA(n+1) + diphosphate. Functionally, DNA-dependent RNA polymerase catalyzes the transcription of DNA into RNA using the four ribonucleoside triphosphates as substrates. This is DNA-directed RNA polymerase subunit beta' from Chloroflexus aggregans (strain MD-66 / DSM 9485).